Consider the following 291-residue polypeptide: MRVVVLMGGRSSEREISLKTGKAVAKALRELGHEVYELDLDKELPCKLLEIKPDKVFIALHGRYGEDGTVQGLLEILDIPYTGSDTIASAVSIDKDFTKRIVKSLGINTPDWETFISEGDVLNTEWNKFPAVVKPVREGSSVGLKIVESLEELKEYALDLLKKTERVMVEEFVEGRDMTVGILKGEALPVVEIIPKKGVYDYECKYTKGMSEYRILKDEKLSKKLQEISLKISKFLSLKDFARIDFRVTKEGKIFFLEVNTIPGMTELSLLPMAAKEKGMDFKKLISIIIT.

One can recognise an ATP-grasp domain in the interval 99–291 (KRIVKSLGIN…FKKLISIIIT (193 aa)). 125 to 179 (EWNKFPAVVKPVREGSSVGLKIVESLEELKEYALDLLKKTERVMVEEFVEGRDMT) contacts ATP. Residues Asp245, Glu258, and Asn260 each coordinate Mg(2+).

It belongs to the D-alanine--D-alanine ligase family. Mg(2+) is required as a cofactor. Requires Mn(2+) as cofactor.

It localises to the cytoplasm. It catalyses the reaction 2 D-alanine + ATP = D-alanyl-D-alanine + ADP + phosphate + H(+). It participates in cell wall biogenesis; peptidoglycan biosynthesis. In terms of biological role, cell wall formation. The protein is D-alanine--D-alanine ligase of Aquifex aeolicus (strain VF5).